A 377-amino-acid chain; its full sequence is Succinyl-diaminopimelate desuccinylase (377 aa).

Residue histidine 75 participates in Zn(2+) binding. The active site involves aspartate 77. Aspartate 106 serves as a coordination point for Zn(2+). Catalysis depends on glutamate 136, which acts as the Proton acceptor. Zn(2+) is bound by residues glutamate 137, glutamate 165, and histidine 350.

Belongs to the peptidase M20A family. DapE subfamily. As to quaternary structure, homodimer. Requires Zn(2+) as cofactor. The cofactor is Co(2+).

It carries out the reaction N-succinyl-(2S,6S)-2,6-diaminopimelate + H2O = (2S,6S)-2,6-diaminopimelate + succinate. Its pathway is amino-acid biosynthesis; L-lysine biosynthesis via DAP pathway; LL-2,6-diaminopimelate from (S)-tetrahydrodipicolinate (succinylase route): step 3/3. Functionally, catalyzes the hydrolysis of N-succinyl-L,L-diaminopimelic acid (SDAP), forming succinate and LL-2,6-diaminopimelate (DAP), an intermediate involved in the bacterial biosynthesis of lysine and meso-diaminopimelic acid, an essential component of bacterial cell walls. This is Succinyl-diaminopimelate desuccinylase from Sphingopyxis alaskensis (strain DSM 13593 / LMG 18877 / RB2256) (Sphingomonas alaskensis).